The following is a 153-amino-acid chain: Large ribosomal subunit protein bL9 (153 aa).

This sequence belongs to the bacterial ribosomal protein bL9 family.

Functionally, binds to the 23S rRNA. The polypeptide is Large ribosomal subunit protein bL9 (Koribacter versatilis (strain Ellin345)).